The chain runs to 872 residues: Alanine--tRNA ligase (872 aa).

Zn(2+)-binding residues include His-563, His-567, Cys-665, and His-669.

This sequence belongs to the class-II aminoacyl-tRNA synthetase family. The cofactor is Zn(2+).

It localises to the cytoplasm. The enzyme catalyses tRNA(Ala) + L-alanine + ATP = L-alanyl-tRNA(Ala) + AMP + diphosphate. Its function is as follows. Catalyzes the attachment of alanine to tRNA(Ala) in a two-step reaction: alanine is first activated by ATP to form Ala-AMP and then transferred to the acceptor end of tRNA(Ala). Also edits incorrectly charged Ser-tRNA(Ala) and Gly-tRNA(Ala) via its editing domain. In Bacteroides fragilis (strain YCH46), this protein is Alanine--tRNA ligase.